The primary structure comprises 233 residues: RNA-free ribonuclease P (233 aa).

The protein belongs to the HARP family.

The enzyme catalyses Endonucleolytic cleavage of RNA, removing 5'-extranucleotides from tRNA precursor.. Its function is as follows. RNA-free RNase P that catalyzes the removal of the 5'-leader sequence from pre-tRNA to produce the mature 5'-terminus. This chain is RNA-free ribonuclease P, found in Methanocaldococcus jannaschii (strain ATCC 43067 / DSM 2661 / JAL-1 / JCM 10045 / NBRC 100440) (Methanococcus jannaschii).